The sequence spans 163 residues: Nucleotide-binding protein APJL_1242 (163 aa).

The protein belongs to the YajQ family.

Functionally, nucleotide-binding protein. This Actinobacillus pleuropneumoniae serotype 3 (strain JL03) protein is Nucleotide-binding protein APJL_1242.